Here is a 139-residue protein sequence, read N- to C-terminus: Large-conductance mechanosensitive channel (139 aa).

3 helical membrane-spanning segments follow: residues 10-30, 40-60, and 80-100; these read FAVKGNVVDLAVAVIVGAAFG, VIMPVVGKIFGGLDFSNYYIA, and LAYGNFITIALNFIILAFIIF.

It belongs to the MscL family. In terms of assembly, homopentamer.

The protein localises to the cell inner membrane. Functionally, channel that opens in response to stretch forces in the membrane lipid bilayer. May participate in the regulation of osmotic pressure changes within the cell. In Janthinobacterium sp. (strain Marseille) (Minibacterium massiliensis), this protein is Large-conductance mechanosensitive channel.